A 200-amino-acid chain; its full sequence is Cytochrome c biogenesis ATP-binding export protein CcmA (200 aa).

The ABC transporter domain maps to 1-200; it reads MRLSGNGLRC…ARELRIGGAA (200 aa). 35–42 contacts ATP; the sequence is GPNGAGKT.

It belongs to the ABC transporter superfamily. CcmA exporter (TC 3.A.1.107) family. In terms of assembly, the complex is composed of two ATP-binding proteins (CcmA) and two transmembrane proteins (CcmB).

It is found in the cell inner membrane. It catalyses the reaction heme b(in) + ATP + H2O = heme b(out) + ADP + phosphate + H(+). In terms of biological role, part of the ABC transporter complex CcmAB involved in the biogenesis of c-type cytochromes; once thought to export heme, this seems not to be the case, but its exact role is uncertain. Responsible for energy coupling to the transport system. The polypeptide is Cytochrome c biogenesis ATP-binding export protein CcmA (Nitrobacter winogradskyi (strain ATCC 25391 / DSM 10237 / CIP 104748 / NCIMB 11846 / Nb-255)).